The primary structure comprises 828 residues: Hapless 2 (828 aa).

The signal sequence occupies residues Met1–Cys32. Over Asp33–Lys680 the chain is Extracellular. Cysteines 53 and 62 form a disulfide. Asn74 carries an N-linked (GlcNAc...) asparagine glycan. Intrachain disulfides connect Cys142–Cys209, Cys170–Cys381, Cys172–Cys191, and Cys363–Cys388. The cd loop; involved in gamete fusion stretch occupies residues Thr174–Cys191. N-linked (GlcNAc...) asparagine glycosylation is found at Asn233, Asn250, Asn264, Asn293, and Asn333. Asn479, Asn516, Asn531, and Asn539 each carry an N-linked (GlcNAc...) asparagine glycan. Residues Cys546 and Cys592 are joined by a disulfide bond. Residues Phe681–Phe701 traverse the membrane as a helical segment. Over Leu702–Arg828 the chain is Cytoplasmic. The disordered stretch occupies residues Arg773–Arg828. Residues Ile788–Lys798 show a composition bias toward basic residues. Positions Gln799 to Ala814 are enriched in basic and acidic residues.

It belongs to the HAP2/GCS1 family.

The protein localises to the cell membrane. Its function is as follows. During fertilization, required on male gametes for their fusion with female gametes, and for subsequent ookinete formation in the host. Thereby, required for mosquito-mediated transmission to other animals. Probably initiates the fusion of gamete cell membranes by inserting part of its extracellular domain into the cell membrane of a female gamete. The chain is Hapless 2 from Plasmodium berghei (strain Anka).